Consider the following 277-residue polypeptide: Uridine-cytidine kinase 1 (277 aa).

A compositionally biased stretch (gly residues) spans 1–10 (MASAGGGDCE). Positions 1–29 (MASAGGGDCEGAGPEADRPHQRPFLIGVS) are disordered. 30-38 (GGTASGKST) is an ATP binding site. 6 residues coordinate substrate: D87, Y115, H120, R169, R178, and Q186. D215 is a binding site for ATP. A disordered region spans residues 246-277 (RSHKRTFPEPGEHPAVLASGKRSHLESSSRPH). T251 bears the Phosphothreonine mark. Basic and acidic residues predominate over residues 268–277 (SHLESSSRPH).

The protein belongs to the uridine kinase family.

It carries out the reaction uridine + ATP = UMP + ADP + H(+). The enzyme catalyses cytidine + ATP = CMP + ADP + H(+). It functions in the pathway pyrimidine metabolism; CTP biosynthesis via salvage pathway; CTP from cytidine: step 1/3. The protein operates within pyrimidine metabolism; UMP biosynthesis via salvage pathway; UMP from uridine: step 1/1. In terms of biological role, phosphorylates uridine and cytidine to uridine monophosphate and cytidine monophosphate. Does not phosphorylate deoxyribonucleosides or purine ribonucleosides. Can use ATP or GTP as a phosphate donor. This is Uridine-cytidine kinase 1 (UCK1) from Bos taurus (Bovine).